Consider the following 479-residue polypeptide: Sulfate adenylyltransferase subunit 1 (479 aa).

In terms of domain architecture, tr-type G spans Lys25–Arg239. A G1 region spans residues Gly34–Ser41. Gly34–Ser41 is a GTP binding site. The segment at Gly92 to Asp96 is G2. Positions Asp113 to Gly116 are G3. Residues Asp113–His117 and Asn168–Asp171 contribute to the GTP site. A G4 region spans residues Asn168–Asp171. Residues Ser206 to Leu208 form a G5 region.

This sequence belongs to the TRAFAC class translation factor GTPase superfamily. Classic translation factor GTPase family. CysN/NodQ subfamily. Heterodimer composed of CysD, the smaller subunit, and CysN.

The enzyme catalyses sulfate + ATP + H(+) = adenosine 5'-phosphosulfate + diphosphate. Its pathway is sulfur metabolism; hydrogen sulfide biosynthesis; sulfite from sulfate: step 1/3. With CysD forms the ATP sulfurylase (ATPS) that catalyzes the adenylation of sulfate producing adenosine 5'-phosphosulfate (APS) and diphosphate, the first enzymatic step in sulfur assimilation pathway. APS synthesis involves the formation of a high-energy phosphoric-sulfuric acid anhydride bond driven by GTP hydrolysis by CysN coupled to ATP hydrolysis by CysD. This Salmonella arizonae (strain ATCC BAA-731 / CDC346-86 / RSK2980) protein is Sulfate adenylyltransferase subunit 1.